The following is a 398-amino-acid chain: Acetate kinase (398 aa).

Asn-7 contributes to the Mg(2+) binding site. Lys-14 serves as a coordination point for ATP. Arg-90 contacts substrate. Residue Asp-147 is the Proton donor/acceptor of the active site. Residues 207 to 211 (HLGNG), 282 to 284 (DMR), and 330 to 334 (GIGEN) each bind ATP. Glu-383 serves as a coordination point for Mg(2+).

The protein belongs to the acetokinase family. In terms of assembly, homodimer. The cofactor is Mg(2+). Requires Mn(2+) as cofactor.

The protein resides in the cytoplasm. It carries out the reaction acetate + ATP = acetyl phosphate + ADP. Its pathway is metabolic intermediate biosynthesis; acetyl-CoA biosynthesis; acetyl-CoA from acetate: step 1/2. Its function is as follows. Catalyzes the formation of acetyl phosphate from acetate and ATP. Can also catalyze the reverse reaction. This Symbiobacterium thermophilum (strain DSM 24528 / JCM 14929 / IAM 14863 / T) protein is Acetate kinase.